The chain runs to 287 residues: HTH-type transcriptional regulator MurR (287 aa).

The HTH rpiR-type domain maps to 1-77 (MLYLAKMRNA…MALIEEHSVS (77 aa)). Positions 37–56 (SRNMAKQLEISQSSIVKFAQ) form a DNA-binding region, H-T-H motif. In terms of domain architecture, SIS spans 128 to 268 (VINLISKAPL…FVGMVQLNDV (141 aa)).

In terms of assembly, homotetramer.

Its pathway is amino-sugar metabolism; N-acetylmuramate degradation [regulation]. Represses the expression of the murPQ operon involved in the uptake and degradation of N-acetylmuramic acid (MurNAc). Binds to two adjacent inverted repeats within the operator region. MurNAc 6-phosphate, the substrate of MurQ, is the specific inducer that weakens binding of MurR to the operator. The protein is HTH-type transcriptional regulator MurR of Salmonella arizonae (strain ATCC BAA-731 / CDC346-86 / RSK2980).